The primary structure comprises 178 residues: Large ribosomal subunit protein uL6 (178 aa).

It belongs to the universal ribosomal protein uL6 family. As to quaternary structure, part of the 50S ribosomal subunit.

Its function is as follows. This protein binds to the 23S rRNA, and is important in its secondary structure. It is located near the subunit interface in the base of the L7/L12 stalk, and near the tRNA binding site of the peptidyltransferase center. The chain is Large ribosomal subunit protein uL6 from Coxiella burnetii (strain CbuG_Q212) (Coxiella burnetii (strain Q212)).